A 289-amino-acid chain; its full sequence is Protease HtpX homolog (289 aa).

Helical transmembrane passes span 3–23 (IVGT…WFFF) and 28–48 (TILA…YKVG). Histidine 129 is a binding site for Zn(2+). The active site involves glutamate 130. Position 133 (histidine 133) interacts with Zn(2+). 2 helical membrane passes run 144-164 (LGQG…LFSG) and 172-192 (FLAI…VLAI). Residue glutamate 197 participates in Zn(2+) binding. The disordered stretch occupies residues 222–250 (SQGNEQAAQQQRQRTSRGRGRRQRGQRND). Over residues 235–246 (RTSRGRGRRQRG) the composition is skewed to basic residues.

Belongs to the peptidase M48B family. Zn(2+) is required as a cofactor.

The protein resides in the cell membrane. This is Protease HtpX homolog from Halobacterium salinarum (strain ATCC 700922 / JCM 11081 / NRC-1) (Halobacterium halobium).